The primary structure comprises 882 residues: Holliday junction resolvase MOC1, chloroplastic (882 aa).

Disordered regions lie at residues 87-148 and 323-351; these read IRDG…QTPT and TPAA…PRAA. Residues 91–111 are compositionally biased toward polar residues; sequence PNSNSRCSTVRTHATRSKSTG. Low complexity predominate over residues 112-125; it reads PSRATSSGPATAAP. A compositionally biased stretch (polar residues) spans 134–148; that stretch reads NDTQDGGLTSEQTPT. A compositionally biased stretch (low complexity) spans 323–337; it reads TPAAASQTPPTTVTS. Mg(2+) contacts are provided by Asp397, Glu552, Asn629, and Asp634. A disordered region spans residues 710–882; it reads KVERKAQARS…DGGVSGSESE (173 aa). A compositionally biased stretch (acidic residues) spans 732 to 743; the sequence is EEPEAQAEEEQA. Composition is skewed to low complexity over residues 744–758, 769–783, 810–819, and 830–844; these read EAGT…GAAA, VESG…VAAG, SGKSSSKAEA, and ASVG…SVGS. Gly residues-rich tracts occupy residues 845-857 and 868-882; these read SSGG…GGVK and AKAG…SESE.

It depends on Mg(2+) as a cofactor. Requires Mn(2+) as cofactor.

Its subcellular location is the plastid. The protein resides in the chloroplast. It catalyses the reaction Endonucleolytic cleavage at a junction such as a reciprocal single-stranded crossover between two homologous DNA duplexes (Holliday junction).. Its function is as follows. A structure-specific endonuclease that resolves Holliday junction (HJ) intermediates during genetic recombination. Cleaves 4-way DNA junctions introducing paired nicks in opposing strands, leaving a 5'-terminal phosphate and a 3'-terminal hydroxyl group that are ligated to produce recombinant products. Mediates chloroplast nucleoid segregation during chloroplast division. This chain is Holliday junction resolvase MOC1, chloroplastic, found in Chlamydomonas reinhardtii (Chlamydomonas smithii).